Reading from the N-terminus, the 157-residue chain is Transcription elongation factor GreA (157 aa).

The stretch at 14–37 (LRKELERLLKRRPLITEAIAEARE) forms a coiled coil.

This sequence belongs to the GreA/GreB family.

Necessary for efficient RNA polymerase transcription elongation past template-encoded arresting sites. The arresting sites in DNA have the property of trapping a certain fraction of elongating RNA polymerases that pass through, resulting in locked ternary complexes. Cleavage of the nascent transcript by cleavage factors such as GreA or GreB allows the resumption of elongation from the new 3'terminus. GreA releases sequences of 2 to 3 nucleotides. This chain is Transcription elongation factor GreA, found in Vibrio vulnificus (strain CMCP6).